A 325-amino-acid chain; its full sequence is Elongation factor P--(R)-beta-lysine ligase (325 aa).

76–78 (SPE) is a substrate binding site. Residues 100-102 (RNE) and Asn-109 each bind ATP. Tyr-118 lines the substrate pocket. An ATP-binding site is contributed by 244–245 (EL). Glu-251 is a binding site for substrate. Residue Gly-300 participates in ATP binding.

Belongs to the class-II aminoacyl-tRNA synthetase family. EpmA subfamily. As to quaternary structure, homodimer.

It carries out the reaction D-beta-lysine + L-lysyl-[protein] + ATP = N(6)-((3R)-3,6-diaminohexanoyl)-L-lysyl-[protein] + AMP + diphosphate + H(+). With EpmB is involved in the beta-lysylation step of the post-translational modification of translation elongation factor P (EF-P) on 'Lys-34'. Catalyzes the ATP-dependent activation of (R)-beta-lysine produced by EpmB, forming a lysyl-adenylate, from which the beta-lysyl moiety is then transferred to the epsilon-amino group of EF-P 'Lys-34'. This Escherichia coli O139:H28 (strain E24377A / ETEC) protein is Elongation factor P--(R)-beta-lysine ligase.